A 227-amino-acid chain; its full sequence is Cytochrome c oxidase subunit 2 (227 aa).

Topologically, residues 1–14 are mitochondrial intermembrane; it reads MAYPMQLGLQDATS. Residues 15-45 traverse the membrane as a helical segment; it reads PIMEELTDFHDHTLMIVFLISTLVLYIISMM. The Mitochondrial matrix segment spans residues 46 to 59; that stretch reads LTTKLTHTSTMDAQ. A helical transmembrane segment spans residues 60–87; it reads EVETIWTVLPAVILVMIALPSLRILYMM. At 88 to 227 the chain is on the mitochondrial intermembrane side; it reads DEINDPYLTV…QFESWASSMT (140 aa). Residues H161, C196, E198, C200, H204, and M207 each contribute to the Cu cation site. Residue E198 participates in Mg(2+) binding.

It belongs to the cytochrome c oxidase subunit 2 family. Component of the cytochrome c oxidase (complex IV, CIV), a multisubunit enzyme composed of 14 subunits. The complex is composed of a catalytic core of 3 subunits MT-CO1, MT-CO2 and MT-CO3, encoded in the mitochondrial DNA, and 11 supernumerary subunits COX4I, COX5A, COX5B, COX6A, COX6B, COX6C, COX7A, COX7B, COX7C, COX8 and NDUFA4, which are encoded in the nuclear genome. The complex exists as a monomer or a dimer and forms supercomplexes (SCs) in the inner mitochondrial membrane with NADH-ubiquinone oxidoreductase (complex I, CI) and ubiquinol-cytochrome c oxidoreductase (cytochrome b-c1 complex, complex III, CIII), resulting in different assemblies (supercomplex SCI(1)III(2)IV(1) and megacomplex MCI(2)III(2)IV(2)). Found in a complex with TMEM177, COA6, COX18, COX20, SCO1 and SCO2. Interacts with TMEM177 in a COX20-dependent manner. Interacts with COX20. Interacts with COX16. Cu cation is required as a cofactor.

The protein localises to the mitochondrion inner membrane. It carries out the reaction 4 Fe(II)-[cytochrome c] + O2 + 8 H(+)(in) = 4 Fe(III)-[cytochrome c] + 2 H2O + 4 H(+)(out). Component of the cytochrome c oxidase, the last enzyme in the mitochondrial electron transport chain which drives oxidative phosphorylation. The respiratory chain contains 3 multisubunit complexes succinate dehydrogenase (complex II, CII), ubiquinol-cytochrome c oxidoreductase (cytochrome b-c1 complex, complex III, CIII) and cytochrome c oxidase (complex IV, CIV), that cooperate to transfer electrons derived from NADH and succinate to molecular oxygen, creating an electrochemical gradient over the inner membrane that drives transmembrane transport and the ATP synthase. Cytochrome c oxidase is the component of the respiratory chain that catalyzes the reduction of oxygen to water. Electrons originating from reduced cytochrome c in the intermembrane space (IMS) are transferred via the dinuclear copper A center (CU(A)) of subunit 2 and heme A of subunit 1 to the active site in subunit 1, a binuclear center (BNC) formed by heme A3 and copper B (CU(B)). The BNC reduces molecular oxygen to 2 water molecules using 4 electrons from cytochrome c in the IMS and 4 protons from the mitochondrial matrix. This Cratogeomys bursarius (Plains pocket gopher) protein is Cytochrome c oxidase subunit 2 (MT-CO2).